A 274-amino-acid chain; its full sequence is Diaminopimelate epimerase (274 aa).

3 residues coordinate substrate: asparagine 11, glutamine 44, and asparagine 64. Cysteine 73 (proton donor) is an active-site residue. Residues 74–75 (GN), asparagine 157, asparagine 190, and 208–209 (ER) each bind substrate. Cysteine 217 (proton acceptor) is an active-site residue. Residue 218-219 (GS) participates in substrate binding.

Belongs to the diaminopimelate epimerase family. Homodimer.

Its subcellular location is the cytoplasm. The catalysed reaction is (2S,6S)-2,6-diaminopimelate = meso-2,6-diaminopimelate. The protein operates within amino-acid biosynthesis; L-lysine biosynthesis via DAP pathway; DL-2,6-diaminopimelate from LL-2,6-diaminopimelate: step 1/1. Its function is as follows. Catalyzes the stereoinversion of LL-2,6-diaminopimelate (L,L-DAP) to meso-diaminopimelate (meso-DAP), a precursor of L-lysine and an essential component of the bacterial peptidoglycan. This chain is Diaminopimelate epimerase, found in Histophilus somni (strain 129Pt) (Haemophilus somnus).